The following is a 469-amino-acid chain: 3-isopropylmalate dehydratase large subunit (469 aa).

Residues C349, C409, and C412 each contribute to the [4Fe-4S] cluster site. Residues 424 to 443 (QISASSSNRNFKGRQGSPSG) are disordered.

The protein belongs to the aconitase/IPM isomerase family. LeuC type 1 subfamily. As to quaternary structure, heterodimer of LeuC and LeuD. [4Fe-4S] cluster serves as cofactor.

It carries out the reaction (2R,3S)-3-isopropylmalate = (2S)-2-isopropylmalate. Its pathway is amino-acid biosynthesis; L-leucine biosynthesis; L-leucine from 3-methyl-2-oxobutanoate: step 2/4. Functionally, catalyzes the isomerization between 2-isopropylmalate and 3-isopropylmalate, via the formation of 2-isopropylmaleate. The protein is 3-isopropylmalate dehydratase large subunit of Thermosynechococcus vestitus (strain NIES-2133 / IAM M-273 / BP-1).